A 139-amino-acid chain; its full sequence is Protein cornichon homolog 4 (139 aa).

A run of 3 helical transmembrane segments spans residues 5–25, 57–77, and 118–138; these read VFVF…YFII, LVTV…NLPV, and LGFH…ALIN.

The protein belongs to the cornichon family. As to quaternary structure, interacts with Sec23/24 complex components SEC24B and SEC24D. Interacts with CCR5. Interacts with ADRB2 in the early secretory pathway.

It localises to the membrane. Its subcellular location is the endoplasmic reticulum. The protein resides in the endoplasmic reticulum-Golgi intermediate compartment. Involved in G protein-coupled receptors (GPCRs) trafficking from the endoplasmic reticulum to the cell surface; it promotes the exit of GPCRs from the early secretory pathway, likely through interaction with the COPII machinery. This is Protein cornichon homolog 4 (CNIH4) from Bos taurus (Bovine).